Consider the following 869-residue polypeptide: Probable inorganic carbon transporter subunit DabA (869 aa).

A disordered region spans residues 1–32 (MSTATLEQRAKRGEAPRANDAGHCAHPADGAR). Positions 8–17 (QRAKRGEAPR) are enriched in basic and acidic residues. Zn(2+) is bound by residues Cys376, Asp378, His555, and Cys570.

Belongs to the inorganic carbon transporter (TC 9.A.2) DabA family. As to quaternary structure, forms a complex with DabB. It depends on Zn(2+) as a cofactor.

The protein localises to the cell inner membrane. Part of an energy-coupled inorganic carbon pump. This chain is Probable inorganic carbon transporter subunit DabA, found in Burkholderia multivorans (strain ATCC 17616 / 249).